A 580-amino-acid polypeptide reads, in one-letter code: Proline--tRNA ligase (580 aa).

Belongs to the class-II aminoacyl-tRNA synthetase family. ProS type 1 subfamily. Homodimer.

It localises to the cytoplasm. It carries out the reaction tRNA(Pro) + L-proline + ATP = L-prolyl-tRNA(Pro) + AMP + diphosphate. In terms of biological role, catalyzes the attachment of proline to tRNA(Pro) in a two-step reaction: proline is first activated by ATP to form Pro-AMP and then transferred to the acceptor end of tRNA(Pro). As ProRS can inadvertently accommodate and process non-cognate amino acids such as alanine and cysteine, to avoid such errors it has two additional distinct editing activities against alanine. One activity is designated as 'pretransfer' editing and involves the tRNA(Pro)-independent hydrolysis of activated Ala-AMP. The other activity is designated 'posttransfer' editing and involves deacylation of mischarged Ala-tRNA(Pro). The misacylated Cys-tRNA(Pro) is not edited by ProRS. The sequence is that of Proline--tRNA ligase from Maridesulfovibrio salexigens (strain ATCC 14822 / DSM 2638 / NCIMB 8403 / VKM B-1763) (Desulfovibrio salexigens).